Consider the following 532-residue polypeptide: CTP synthase (532 aa).

The interval 1 to 267 (MTKYIFVTGG…DDIVLEHLQL (267 aa)) is amidoligase domain. Residue Ser13 participates in CTP binding. Position 13 (Ser13) interacts with UTP. 14 to 19 (SIGKGI) is an ATP binding site. Residue Tyr54 coordinates L-glutamine. Residue Asp71 coordinates ATP. Residues Asp71 and Glu141 each coordinate Mg(2+). Residues 148–150 (DIE), 188–193 (KTKPTQ), and Lys224 contribute to the CTP site. UTP contacts are provided by residues 188–193 (KTKPTQ) and Lys224. One can recognise a Glutamine amidotransferase type-1 domain in the interval 292 to 532 (RIGLVGKYVS…DFVGAALNNK (241 aa)). Gly354 is a binding site for L-glutamine. Residue Cys381 is the Nucleophile; for glutamine hydrolysis of the active site. L-glutamine contacts are provided by residues 382–385 (LGMQ), Glu405, and Arg462. Residues His507 and Glu509 contribute to the active site.

It belongs to the CTP synthase family. In terms of assembly, homotetramer.

The enzyme catalyses UTP + L-glutamine + ATP + H2O = CTP + L-glutamate + ADP + phosphate + 2 H(+). The catalysed reaction is L-glutamine + H2O = L-glutamate + NH4(+). It carries out the reaction UTP + NH4(+) + ATP = CTP + ADP + phosphate + 2 H(+). It functions in the pathway pyrimidine metabolism; CTP biosynthesis via de novo pathway; CTP from UDP: step 2/2. With respect to regulation, allosterically activated by GTP, when glutamine is the substrate; GTP has no effect on the reaction when ammonia is the substrate. The allosteric effector GTP functions by stabilizing the protein conformation that binds the tetrahedral intermediate(s) formed during glutamine hydrolysis. Inhibited by the product CTP, via allosteric rather than competitive inhibition. In terms of biological role, catalyzes the ATP-dependent amination of UTP to CTP with either L-glutamine or ammonia as the source of nitrogen. Regulates intracellular CTP levels through interactions with the four ribonucleotide triphosphates. This is CTP synthase from Listeria monocytogenes serotype 4b (strain F2365).